Consider the following 131-residue polypeptide: Protein E11 homolog (131 aa).

It belongs to the chordopoxvirinae E11 family.

It is found in the virion. This chain is Protein E11 homolog, found in Fowlpox virus (strain NVSL) (FPV).